Here is a 232-residue protein sequence, read N- to C-terminus: MSNVDELEIDKFSQLAHKWWDKDSEFKPLHEINPLRLDFIDRHASIAGKKVLDVGCGGGILAESMALRGAQVTGIDLAKKSLKVAQLHSLESGVPIDYRCVAVEDLAAEMPGAFDAVTCMEMLEHVPDPESVVRACSTLVKPGGWVFFSTLNRNAKAYLLAVVGAEYVLNMLPRGTHEYARFLKPSELGRMARHAGLGLQTLSGMGYNPVTRIYSLNDDTAVNYLMATRRAD.

Residues Arg36, Gly55, Asp76, and Met120 each coordinate S-adenosyl-L-methionine.

Belongs to the methyltransferase superfamily. UbiG/COQ3 family.

The enzyme catalyses a 3-demethylubiquinol + S-adenosyl-L-methionine = a ubiquinol + S-adenosyl-L-homocysteine + H(+). The catalysed reaction is a 3-(all-trans-polyprenyl)benzene-1,2-diol + S-adenosyl-L-methionine = a 2-methoxy-6-(all-trans-polyprenyl)phenol + S-adenosyl-L-homocysteine + H(+). It functions in the pathway cofactor biosynthesis; ubiquinone biosynthesis. O-methyltransferase that catalyzes the 2 O-methylation steps in the ubiquinone biosynthetic pathway. The sequence is that of Ubiquinone biosynthesis O-methyltransferase from Chromobacterium violaceum (strain ATCC 12472 / DSM 30191 / JCM 1249 / CCUG 213 / NBRC 12614 / NCIMB 9131 / NCTC 9757 / MK).